A 375-amino-acid polypeptide reads, in one-letter code: Succinyl-diaminopimelate desuccinylase (375 aa).

H66 lines the Zn(2+) pocket. D68 is a catalytic residue. D99 lines the Zn(2+) pocket. E133 serves as the catalytic Proton acceptor. 3 residues coordinate Zn(2+): E134, E162, and H348.

The protein belongs to the peptidase M20A family. DapE subfamily. Homodimer. Zn(2+) serves as cofactor. Requires Co(2+) as cofactor.

The enzyme catalyses N-succinyl-(2S,6S)-2,6-diaminopimelate + H2O = (2S,6S)-2,6-diaminopimelate + succinate. It participates in amino-acid biosynthesis; L-lysine biosynthesis via DAP pathway; LL-2,6-diaminopimelate from (S)-tetrahydrodipicolinate (succinylase route): step 3/3. Its function is as follows. Catalyzes the hydrolysis of N-succinyl-L,L-diaminopimelic acid (SDAP), forming succinate and LL-2,6-diaminopimelate (DAP), an intermediate involved in the bacterial biosynthesis of lysine and meso-diaminopimelic acid, an essential component of bacterial cell walls. The polypeptide is Succinyl-diaminopimelate desuccinylase (Serratia proteamaculans (strain 568)).